Here is a 154-residue protein sequence, read N- to C-terminus: D-aminoacyl-tRNA deacylase (154 aa).

The Gly-cisPro motif, important for rejection of L-amino acids signature appears at 137-138 (GP).

This sequence belongs to the DTD family. Homodimer.

It localises to the cytoplasm. It carries out the reaction glycyl-tRNA(Ala) + H2O = tRNA(Ala) + glycine + H(+). It catalyses the reaction a D-aminoacyl-tRNA + H2O = a tRNA + a D-alpha-amino acid + H(+). Its function is as follows. An aminoacyl-tRNA editing enzyme that deacylates mischarged D-aminoacyl-tRNAs. Also deacylates mischarged glycyl-tRNA(Ala), protecting cells against glycine mischarging by AlaRS. Acts via tRNA-based rather than protein-based catalysis; rejects L-amino acids rather than detecting D-amino acids in the active site. By recycling D-aminoacyl-tRNA to D-amino acids and free tRNA molecules, this enzyme counteracts the toxicity associated with the formation of D-aminoacyl-tRNA entities in vivo and helps enforce protein L-homochirality. The polypeptide is D-aminoacyl-tRNA deacylase (Thermomicrobium roseum (strain ATCC 27502 / DSM 5159 / P-2)).